Consider the following 347-residue polypeptide: Holliday junction branch migration complex subunit RuvB (347 aa).

Residues 1 to 183 (MTDVPRMVTP…FGIPVRLNFY (183 aa)) form a large ATPase domain (RuvB-L) region. Residues L22, R23, G64, K67, T68, T69, 130–132 (EDF), R173, Y183, and R220 each bind ATP. T68 contacts Mg(2+). The tract at residues 184–254 (TVDELEKIVS…IADHALGALE (71 aa)) is small ATPAse domain (RuvB-S). A head domain (RuvB-H) region spans residues 257–347 (AAGLDAMDRR…QFGLFGGEDE (91 aa)). The DNA site is built by R293, R312, and R317.

Belongs to the RuvB family. Homohexamer. Forms an RuvA(8)-RuvB(12)-Holliday junction (HJ) complex. HJ DNA is sandwiched between 2 RuvA tetramers; dsDNA enters through RuvA and exits via RuvB. An RuvB hexamer assembles on each DNA strand where it exits the tetramer. Each RuvB hexamer is contacted by two RuvA subunits (via domain III) on 2 adjacent RuvB subunits; this complex drives branch migration. In the full resolvosome a probable DNA-RuvA(4)-RuvB(12)-RuvC(2) complex forms which resolves the HJ.

It localises to the cytoplasm. The enzyme catalyses ATP + H2O = ADP + phosphate + H(+). In terms of biological role, the RuvA-RuvB-RuvC complex processes Holliday junction (HJ) DNA during genetic recombination and DNA repair, while the RuvA-RuvB complex plays an important role in the rescue of blocked DNA replication forks via replication fork reversal (RFR). RuvA specifically binds to HJ cruciform DNA, conferring on it an open structure. The RuvB hexamer acts as an ATP-dependent pump, pulling dsDNA into and through the RuvAB complex. RuvB forms 2 homohexamers on either side of HJ DNA bound by 1 or 2 RuvA tetramers; 4 subunits per hexamer contact DNA at a time. Coordinated motions by a converter formed by DNA-disengaged RuvB subunits stimulates ATP hydrolysis and nucleotide exchange. Immobilization of the converter enables RuvB to convert the ATP-contained energy into a lever motion, pulling 2 nucleotides of DNA out of the RuvA tetramer per ATP hydrolyzed, thus driving DNA branch migration. The RuvB motors rotate together with the DNA substrate, which together with the progressing nucleotide cycle form the mechanistic basis for DNA recombination by continuous HJ branch migration. Branch migration allows RuvC to scan DNA until it finds its consensus sequence, where it cleaves and resolves cruciform DNA. This chain is Holliday junction branch migration complex subunit RuvB, found in Nitrobacter hamburgensis (strain DSM 10229 / NCIMB 13809 / X14).